A 143-amino-acid polypeptide reads, in one-letter code: Small ribosomal subunit protein uS12 (143 aa).

Residues 1 to 19 (MGKPRGLRTARKHVNHRRD) are compositionally biased toward basic residues. Residues 1–23 (MGKPRGLRTARKHVNHRRDQRWA) form a disordered region. Proline 62 bears the 3-hydroxyproline mark.

This sequence belongs to the universal ribosomal protein uS12 family. In terms of assembly, component of the 40S small ribosomal subunit. Hydroxylation at Pro-62 affects translation termination efficiency.

The protein resides in the cytoplasm. It is found in the cytosol. Its subcellular location is the rough endoplasmic reticulum. The polypeptide is Small ribosomal subunit protein uS12 (RpS23) (Drosophila melanogaster (Fruit fly)).